A 367-amino-acid polypeptide reads, in one-letter code: Glutamate 5-kinase (367 aa).

An ATP-binding site is contributed by lysine 10. Residues serine 50, aspartate 137, and asparagine 149 each coordinate substrate. ATP-binding positions include 169–170 (TD) and 211–217 (TGGMSTK). A PUA domain is found at 275–353 (AGEITVDDGA…QQIAEILGYE (79 aa)).

Belongs to the glutamate 5-kinase family.

It localises to the cytoplasm. It catalyses the reaction L-glutamate + ATP = L-glutamyl 5-phosphate + ADP. It functions in the pathway amino-acid biosynthesis; L-proline biosynthesis; L-glutamate 5-semialdehyde from L-glutamate: step 1/2. In terms of biological role, catalyzes the transfer of a phosphate group to glutamate to form L-glutamate 5-phosphate. In Pectobacterium carotovorum subsp. carotovorum (strain PC1), this protein is Glutamate 5-kinase.